Reading from the N-terminus, the 414-residue chain is Cytochrome P450 CYP105Q4 (414 aa).

Polar residues predominate over residues 1 to 12; that stretch reads MSDTLASPSPET. Residues 1-21 are disordered; it reads MSDTLASPSPETASGIPDYPM. 5 residues coordinate heme: H108, Q302, R304, H361, and C363.

Belongs to the cytochrome P450 family. Heme is required as a cofactor.

Functionally, can bind oleic-acid derivatives, amphotericin B like precursors and a variety of nitrogen ligand donors. In Mycobacterium marinum (strain ATCC BAA-535 / M), this protein is Cytochrome P450 CYP105Q4.